The sequence spans 290 residues: Ribosomal RNA small subunit methyltransferase A (290 aa).

6 residues coordinate S-adenosyl-L-methionine: Asn-27, Leu-29, Gly-54, Glu-75, Asp-100, and Asn-125.

It belongs to the class I-like SAM-binding methyltransferase superfamily. rRNA adenine N(6)-methyltransferase family. RsmA subfamily.

The protein localises to the cytoplasm. The enzyme catalyses adenosine(1518)/adenosine(1519) in 16S rRNA + 4 S-adenosyl-L-methionine = N(6)-dimethyladenosine(1518)/N(6)-dimethyladenosine(1519) in 16S rRNA + 4 S-adenosyl-L-homocysteine + 4 H(+). In terms of biological role, specifically dimethylates two adjacent adenosines (A1518 and A1519) in the loop of a conserved hairpin near the 3'-end of 16S rRNA in the 30S particle. May play a critical role in biogenesis of 30S subunits. This Streptococcus agalactiae serotype Ia (strain ATCC 27591 / A909 / CDC SS700) protein is Ribosomal RNA small subunit methyltransferase A.